A 380-amino-acid chain; its full sequence is Forkhead box protein F1 (380 aa).

Polar residues predominate over residues 1-19 (MTAEVQQPSVQTPAHSSPM). Residues 1-49 (MTAEVQQPSVQTPAHSSPMTEKPVQTPVMETSSSSSSTKAKKTNAGIRR) are disordered. Positions 52-146 (KPPYSYIALI…EEGSFRRRPR (95 aa)) form a DNA-binding region, fork-head.

It is found in the nucleus. The protein is Forkhead box protein F1 (foxf1) of Danio rerio (Zebrafish).